The chain runs to 434 residues: MTKTDERKPAIFLLSLGCSKNTVDSERLTAQAVASGLTFTDNVDEADIILINTCGFIKDAKQESIDETLAAIGKKEEGVVREVYVMGCLVELYRKELAEEMPEIDGLFGTRELPEVLAAIGAKYREELFDRRELLTPPHYAFLKIAEGCNRRCSFCSIPKIRGPYVSQPIEQLLREAALLQQQGVKELNLIAQDISVYGYDLYGKSALNDLTLRLSDMGFNWIRLLYAYPLNFPLEVISTMRERPNVCNYIDMPLQHINDRILKSMQRGIGRKATEQLIDDIRQKNPDIRLRTTMIAGYPGETRAEFEELLDFIRQTRFDRLGCFPYRHEEHASAYALEDTVSDEEKEKRVGELMELQEGISASLNRKLEGQTLKVLIDRIEESVAYARTEYDAPEVDNDVIIEIGDEAVEEGDFRQVMIEDSTAYELFGRISG.

Positions 9–125 (PAIFLLSLGC…VLAAIGAKYR (117 aa)) constitute an MTTase N-terminal domain. [4Fe-4S] cluster contacts are provided by C18, C54, C88, C149, C153, and C156. Residues 135–364 (LTPPHYAFLK…MELQEGISAS (230 aa)) enclose the Radical SAM core domain. Positions 367–434 (RKLEGQTLKV…AYELFGRISG (68 aa)) constitute a TRAM domain.

Belongs to the methylthiotransferase family. RimO subfamily. Requires [4Fe-4S] cluster as cofactor.

It is found in the cytoplasm. The catalysed reaction is L-aspartate(89)-[ribosomal protein uS12]-hydrogen + (sulfur carrier)-SH + AH2 + 2 S-adenosyl-L-methionine = 3-methylsulfanyl-L-aspartate(89)-[ribosomal protein uS12]-hydrogen + (sulfur carrier)-H + 5'-deoxyadenosine + L-methionine + A + S-adenosyl-L-homocysteine + 2 H(+). Functionally, catalyzes the methylthiolation of an aspartic acid residue of ribosomal protein uS12. The polypeptide is Ribosomal protein uS12 methylthiotransferase RimO (Chlorobaculum tepidum (strain ATCC 49652 / DSM 12025 / NBRC 103806 / TLS) (Chlorobium tepidum)).